The following is a 99-amino-acid chain: DNA-directed RNA polymerase subunit omega (99 aa).

This sequence belongs to the RNA polymerase subunit omega family. The RNAP catalytic core consists of 2 alpha, 1 beta, 1 beta' and 1 omega subunit. When a sigma factor is associated with the core the holoenzyme is formed, which can initiate transcription.

It catalyses the reaction RNA(n) + a ribonucleoside 5'-triphosphate = RNA(n+1) + diphosphate. Promotes RNA polymerase assembly. Latches the N- and C-terminal regions of the beta' subunit thereby facilitating its interaction with the beta and alpha subunits. The chain is DNA-directed RNA polymerase subunit omega from Stenotrophomonas maltophilia (strain K279a).